The following is a 449-amino-acid chain: Pentalenene oxygenase (449 aa).

Residues 251–273 traverse the membrane as a helical segment; sequence VITVMAAGTETVAGTLTWIFHLL. C393 serves as a coordination point for heme.

It belongs to the cytochrome P450 family.

Its subcellular location is the membrane. The enzyme catalyses pentalenene + 4 reduced [2Fe-2S]-[ferredoxin] + 2 O2 + 4 H(+) = pentalen-13-al + 4 oxidized [2Fe-2S]-[ferredoxin] + 3 H2O. The protein operates within antibiotic biosynthesis; neopentalenolactone biosynthesis. Catalyzes the conversion of pentalenene to pentalen-13-al by stepwise oxidation via pentalen-13-ol, a precursor of neopentalenolactone antibiotic. The chain is Pentalenene oxygenase (ptlI) from Streptomyces avermitilis (strain ATCC 31267 / DSM 46492 / JCM 5070 / NBRC 14893 / NCIMB 12804 / NRRL 8165 / MA-4680).